Reading from the N-terminus, the 444-residue chain is DNA primase DnaG (444 aa).

Residues 173–250 (DAILIVEGRS…YVTRAPRGLE (78 aa)) enclose the Toprim domain. Mg(2+) is bound by residues glutamate 179, aspartate 221, and aspartate 223. The tract at residues 302–354 (VTSSVNKTDKYSQKNESKQFKQQKNENKQVKDNSKEKTQKSTEKHNETEETHL) is disordered. Residues 308-354 (KTDKYSQKNESKQFKQQKNENKQVKDNSKEKTQKSTEKHNETEETHL) are compositionally biased toward basic and acidic residues.

It belongs to the archaeal DnaG primase family. Forms a ternary complex with MCM helicase and DNA. Component of the archaeal exosome complex. It depends on Mg(2+) as a cofactor.

The enzyme catalyses ssDNA + n NTP = ssDNA/pppN(pN)n-1 hybrid + (n-1) diphosphate.. Its function is as follows. RNA polymerase that catalyzes the synthesis of short RNA molecules used as primers for DNA polymerase during DNA replication. Also part of the exosome, which is a complex involved in RNA degradation. Acts as a poly(A)-binding protein that enhances the interaction between heteromeric, adenine-rich transcripts and the exosome. This chain is DNA primase DnaG, found in Methanosphaera stadtmanae (strain ATCC 43021 / DSM 3091 / JCM 11832 / MCB-3).